The following is a 177-amino-acid chain: MNMCTDGKKYHSTATSAAVGASAPGVPDARAIAAICEQLRRHVADLGVLYIKLHNYHWHIYGIEFKQVHELLEEYYVSVTEAFDTIAERLLQLGAQAPASMAEYLALSGIAEETEKEITIVSALARVKRDFEYLSTRFSQTQVLAAESGDAVTDGIITDILRTLGKAIWMLGATLKA.

The protein belongs to the Dps family. As to quaternary structure, homodecamer.

The chain is Antigen TyF1 from Treponema pallidum subsp. pertenue (Yaws treponeme).